Reading from the N-terminus, the 578-residue chain is GRAM domain-containing protein 4 (578 aa).

Disordered stretches follow at residues 23 to 58 (ESPN…AGPG) and 136 to 159 (TEEQ…ERRS). 2 positions are modified to phosphoserine: Ser-24 and Ser-28. Positions 44–53 (SPRDSEELRD) are enriched in basic and acidic residues. Positions 83-143 (HLEIALLEKH…ARTEEQMAQQ (61 aa)) form a coiled coil. The next 3 helical transmembrane spans lie at 240-260 (VYMN…LAIL), 334-354 (ITQK…FFPY), and 356-376 (LVGL…DFIF). The disordered stretch occupies residues 415–435 (QTTSSRSYVPSAPAGLGKEED). Residues 445–523 (GNFHEIFNLT…VDITDIQKYK (79 aa)) form the GRAM domain.

Interacts with RTN4 (isoform B). As to expression, expressed in lung and in primary lung squamous cell carcinoma (LSCC).

The protein localises to the mitochondrion membrane. It is found in the endoplasmic reticulum membrane. Functionally, plays a role as a mediator of E2F1-induced apoptosis in the absence of p53/TP53. Plays a role as a mediator of E2F1-induced apoptosis in the absence of p53/TP53. Inhibits TLR9 response to nucelic acids and regulates TLR9-mediated innate immune response. The polypeptide is GRAM domain-containing protein 4 (Homo sapiens (Human)).